The following is a 201-amino-acid chain: Transmembrane 4 L6 family member 18 (201 aa).

Residues 1 to 9 (MGSRKCGGC) are Cytoplasmic-facing. Residues 10-30 (LSCLLIPLALWSIIVNILLYF) form a helical membrane-spanning segment. Topologically, residues 31-49 (PNGQTSYASSNKLTNYVWY) are extracellular. The chain crosses the membrane as a helical span at residues 50–70 (FEGICFSGIMMLIVTTVLLVL). At 71 to 93 (ENNNNYKCCQSENCSKKYVTLLS) the chain is on the cytoplasmic side. Residues 94-114 (IIFSSLGIAFSGYCLVISALG) form a helical membrane-spanning segment. Over 115 to 157 (LVQGPYCRTLDGWEYAFEGTAGRFLTDSSIWIQCLEPAHVVEW) the chain is Extracellular. Residues 158–178 (NIILFSILITLSGLQVIICLI) traverse the membrane as a helical segment. Residues 179 to 201 (RVVMQLSKILCGSYSVIFQPGII) are Cytoplasmic-facing.

This sequence belongs to the L6 tetraspanin family.

Its subcellular location is the membrane. In Homo sapiens (Human), this protein is Transmembrane 4 L6 family member 18 (TM4SF18).